Reading from the N-terminus, the 130-residue chain is L-ectoine synthase (130 aa).

Belongs to the ectoine synthase family.

The catalysed reaction is (2S)-4-acetamido-2-aminobutanoate = L-ectoine + H2O. Its pathway is amine and polyamine biosynthesis; ectoine biosynthesis; L-ectoine from L-aspartate 4-semialdehyde: step 3/3. Functionally, catalyzes the circularization of gamma-N-acetyl-alpha,gamma-diaminobutyric acid (ADABA) to ectoine (1,4,5,6-tetrahydro-2-methyl-4-pyrimidine carboxylic acid), which is an excellent osmoprotectant. This is L-ectoine synthase from Desulfatibacillum aliphaticivorans.